A 669-amino-acid chain; its full sequence is MLWRRKSFWLALSAFWLLLVLLGVFPLRLAVLPGPLPGRSQGWPRWLDAAFLQSFSQSETNPEDVAQLPRVSRGSSCTWGACFDTSKCRGKVLKIFVHSPAGPTSEAQRRILDSLEGSRYSALSPADACLLLFLPSQDRRGACGPLPPNWNGGRNHLVLSLYPAPCTRLGQAMVAEASPSSDIFRPGFDLALPYLPEAHPLRGGAPGKLQQHSPQPGATLLAVAEEKGRWRITSTHASACLWDRHCEQDPGPQQTYPGETLPNATFCLIPGHRSATSCFLQALQAGCIPVLLSPRWELPFSEVIDWTKAAIIADERLPLQVLAALREMLPSRVLALRQQTQFLWTAYFSSVEKVIHTTLEIIQDRIWGASGHPSLMWNSPPGALLALPTFSTSLQDFPFYHLQLGSGPGSSFSAVIWVGASGESLLKLIQEVAGSRHCAQILILWNSEKLPPDRWPETAVPLTVIKGHRKVSNRFFPYSNISTNVILSLDAQSTLSTSEVDFAFVVWQSFPERMVGFLSGSHFWDEAQGGWGYRTGMTNEFSMVLTTAAFYHRYYHTLFTHSLPKALRTIADETPTCVDVLMNFLVATVTKLPPIKVPYGRQHPEAVPMDSGDPRPVPEPQPLDQDCINRLAAGFGHMPLVSSQVRLDPVLFKDPVSVQRKKYRSLEKP.

Topologically, residues 1–8 are cytoplasmic; that stretch reads MLWRRKSF. Residues 9–29 form a helical; Signal-anchor for type II membrane protein membrane-spanning segment; that stretch reads WLALSAFWLLLVLLGVFPLRL. Residues 30 to 669 lie on the Lumenal side of the membrane; that stretch reads AVLPGPLPGR…RKKYRSLEKP (640 aa). Asn-263 and Asn-480 each carry an N-linked (GlcNAc...) asparagine glycan. A disulfide bridge connects residues Cys-577 and Cys-627. The disordered stretch occupies residues 601–621; the sequence is RQHPEAVPMDSGDPRPVPEPQ.

Belongs to the glycosyltransferase 47 family.

It is found in the endoplasmic reticulum membrane. It carries out the reaction 3-O-{[(1-&gt;4)-beta-D-GlcA-(1-&gt;4)-alpha-D-GlcNAc](n)-(1-&gt;4)-beta-D-GlcA-(1-&gt;3)-beta-D-Gal-(1-&gt;3)-beta-D-Gal-(1-&gt;4)-beta-D-Xyl}-L-seryl-[protein] + UDP-N-acetyl-alpha-D-glucosamine = 3-O-{alpha-D-GlcNAc-[(1-&gt;4)-beta-D-GlcA-(1-&gt;4)-alpha-D-GlcNAc](n)-(1-&gt;4)-beta-D-GlcA-(1-&gt;3)-beta-D-Gal-(1-&gt;3)-beta-D-Gal-(1-&gt;4)-beta-D-Xyl}-L-seryl-[protein] + UDP + H(+). It participates in protein modification; protein glycosylation. Glycosyltransferase required for the biosynthesis of heparan-sulfate (HS). Transfers N-acetyl-alpha-D-glucosamine to the nascent HS chain (GlcNAcT-II activity). Appears to lack GlcNAcT I and GlcAT-II activities. The sequence is that of Exostosin-like 1 (Extl1) from Mus musculus (Mouse).